The chain runs to 200 residues: MDKRVPHPLFKLATELGPLLIFFAANAKFNLFVATGAFMVAIVAAVIVSYVVMRHVPLMALVTAVIVLVFGGLTLVLHDETFIKIKPTIIYALFAVTLYVGLMLGRSFIAILFDQVFNLTPEGWRFLTIRWARFFLFMAVLNEVIWRTQSTDFWVAFKAFGVIPLTAVFAMTQMPLVKRYQIAEATAEASDSERGDTSPR.

Transmembrane regions (helical) follow at residues 32–52 (FVAT…SYVV), 56–76 (VPLM…LTLV), 93–113 (LFAV…AILF), 126–146 (FLTI…EVIW), and 153–173 (FWVA…AMTQ).

Belongs to the YciB family.

Its subcellular location is the cell inner membrane. In terms of biological role, plays a role in cell envelope biogenesis, maintenance of cell envelope integrity and membrane homeostasis. This is Inner membrane-spanning protein YciB from Afipia carboxidovorans (strain ATCC 49405 / DSM 1227 / KCTC 32145 / OM5) (Oligotropha carboxidovorans).